Consider the following 423-residue polypeptide: F-box/LRR-repeat protein 2 (423 aa).

One can recognise an F-box domain in the interval 9-55 (GLINKKLPKELLLRIFSFLDIVTLCRCAQISKAWNILALDGSNWQRV). LRR repeat units lie at residues 61–87 (QTDV…SLRG), 88–113 (CIGV…NLNG), 114–139 (CTKI…DLTS), 140–165 (CVSV…NLSW), 166–191 (CDQI…LLRG), 192–217 (CTQL…NLQS), 218–243 (CSRI…CLSG), 244–269 (CSNL…EAAR), 270–295 (CSHL…DLEE), 296–321 (CVLI…SLSH), 322–350 (CELI…ELDN), 351–375 (CLLV…ELYD), and 376–401 (CQQV…AYFA). The interval 80–90 (LRKLSLRGCIG) is interaction with Calmodulin. A Glycyl lysine isopeptide (Lys-Gly) (interchain with G-Cter in ubiquitin) cross-link involves residue Lys-201. Thr-404 carries the phosphothreonine; by GSK3-beta modification. Cys-420 carries the S-geranylgeranyl cysteine lipid modification. Residues 420-423 (CVIL) carry the CAAX motif motif.

As to quaternary structure, part of the SCF (SKP1-CUL1-F-box) E3 ubiquitin-protein ligase complex SCF(FBXL2) composed of CUL1, SKP1, RBX1 and FBXL2. Interacts with calmodulin; may antagonize substrate ubiquitination by SCF(FBXL2). May interact with PIK3R1. Interacts with PTPN13. In terms of processing, phosphorylated by GSK-beta (GSK3B), promoting recognition by FBXO3, leading to its ubiquitination by the SCF(FBXO3) complex. Ubiquitinated at Lys-201 by the SCF(FBXO3) complex in response to lipopolysaccharide (LPS), leading to its degradation by the proteasome.

It is found in the membrane. It functions in the pathway protein modification; protein ubiquitination. Functionally, calcium-activated substrate recognition component of the SCF (SKP1-cullin-F-box protein) E3 ubiquitin-protein ligase complex, SCF(FBXL2), which mediates the ubiquitination and subsequent proteasomal degradation of target proteins. Unlike many F-box proteins, FBXL2 does not seem to target phosphodegron within its substrates but rather calmodulin-binding motifs and is thereby antagonized by calmodulin. This is the case for the cyclins CCND2 and CCND3 which polyubiquitination and subsequent degradation are inhibited by calmodulin. Through CCND2 and CCND3 degradation induces cell-cycle arrest in G(0). SCF(FBXL2) also mediates PIK3R2 ubiquitination and proteasomal degradation thereby regulating phosphatidylinositol 3-kinase signaling and autophagy. PCYT1A monoubiquitination by SCF(FBXL2) and subsequent degradation regulates synthesis of phosphatidylcholine, which is utilized for formation of membranes and of pulmonary surfactant. The SCF(FBXL2) complex acts as a regulator of inflammation by mediating ubiquitination and degradation of TRAF proteins (TRAF1, TRAF2, TRAF3, TRAF4, TRAF5 and TRAF6). The SCF(FBXL2) complex acts as a negative regulator of the NLRP3 inflammasome by mediating ubiquitination and degradation of NLRP3. In Mus musculus (Mouse), this protein is F-box/LRR-repeat protein 2.